We begin with the raw amino-acid sequence, 570 residues long: Guanine nucleotide-binding protein alpha-3 subunit (570 aa).

A PH domain is found at 10-113; sequence RETLRAYLSK…WIEAIKHAIE (104 aa). Positions 144 to 570 constitute a G-alpha domain; the sequence is PVLKLLLLGT…IISKTLEFYC (427 aa). The tract at residues 147–160 is G1 motif; it reads KLLLLGTGESGKST. 152–159 contributes to the GTP binding site; that stretch reads GTGESGKS. S159 provides a ligand contact to Mg(2+). Composition is skewed to low complexity over residues 254–272 and 290–316; these read NNNSNSSSLKNNSGGSSSS and NSNSASPNGPSSSTTTSTINTHNRSNS. Residues 254 to 321 form a disordered region; it reads NNNSNSSSLK…NRSNSDGSSN (68 aa). Residues 386–394 are G2 motif; that stretch reads DILKSRATT. Residues 388-394, 414-418, 483-486, and A544 contribute to the GTP site; these read LKSRATT, DVAGQ, and NKID. T394 serves as a coordination point for Mg(2+). The G3 motif stretch occupies residues 410–419; sequence FRIVDVAGQR. The interval 479–486 is G4 motif; it reads ILFLNKID. Residues 542-547 form a G5 motif region; that stretch reads TCATDT.

Belongs to the G-alpha family. As to quaternary structure, g proteins are composed of 3 units; alpha, beta and gamma. The alpha chain contains the guanine nucleotide binding site.

In terms of biological role, guanine nucleotide-binding proteins (G proteins) are involved as modulators or transducers in various transmembrane signaling systems. G alpha-3 plays a role in development. G alpha-3 mutants fail to aggregate. This is Guanine nucleotide-binding protein alpha-3 subunit (gpaC) from Dictyostelium discoideum (Social amoeba).